The primary structure comprises 346 residues: MNNFNINNLVRENIKNMQAYASARDEFKDFTHNMVYLDANENPFSNGINRYPDPQQKKLKGFLAQQNKINENQMLLGNGSDEVLDLVFRAFCEPNVDNVITLPPTYGMYGVLANINAIENKEVLLSANFQPNINEILKNINENTKIIFLCSPNNPTGNSFDDQAVLTLLKNFNGLVVIDEAYIDFSKNGSWLHVISDYPNLLITQTLSKAYAMAGLRIGILYASAAIISILNKIKPPYNINNLSQESALKKLEQSTLNFHVKKIINERKKMVQSLISIPFIEKIYPSDANFILIKVEDANKRYNQLIEKGIVIRNRSNQPLCENCLRITIGTKEENEKLITVLKAL.

Lys-209 bears the N6-(pyridoxal phosphate)lysine mark.

Belongs to the class-II pyridoxal-phosphate-dependent aminotransferase family. Histidinol-phosphate aminotransferase subfamily. Homodimer. Pyridoxal 5'-phosphate is required as a cofactor.

It carries out the reaction L-histidinol phosphate + 2-oxoglutarate = 3-(imidazol-4-yl)-2-oxopropyl phosphate + L-glutamate. It participates in amino-acid biosynthesis; L-histidine biosynthesis; L-histidine from 5-phospho-alpha-D-ribose 1-diphosphate: step 7/9. In Flavobacterium psychrophilum (strain ATCC 49511 / DSM 21280 / CIP 103535 / JIP02/86), this protein is Histidinol-phosphate aminotransferase.